Reading from the N-terminus, the 463-residue chain is L-seryl-tRNA(Sec) selenium transferase (463 aa).

K295 bears the N6-(pyridoxal phosphate)lysine mark.

The protein belongs to the SelA family. In terms of assembly, homodecamer; pentamer of dimers. Binds only one seryl-tRNA(Sec) per dimer. Pyridoxal 5'-phosphate is required as a cofactor.

The protein localises to the cytoplasm. It catalyses the reaction L-seryl-tRNA(Sec) + selenophosphate + H(+) = L-selenocysteinyl-tRNA(Sec) + phosphate. Its pathway is aminoacyl-tRNA biosynthesis; selenocysteinyl-tRNA(Sec) biosynthesis; selenocysteinyl-tRNA(Sec) from L-seryl-tRNA(Sec) (bacterial route): step 1/1. In terms of biological role, converts seryl-tRNA(Sec) to selenocysteinyl-tRNA(Sec) required for selenoprotein biosynthesis. This Salmonella dublin (strain CT_02021853) protein is L-seryl-tRNA(Sec) selenium transferase.